The primary structure comprises 114 residues: Probable 4-amino-4-deoxy-L-arabinose-phosphoundecaprenol flippase subunit ArnE (114 aa).

Transmembrane regions (helical) follow at residues 41-61, 64-84, and 94-114; these read PWLIASVVALGSGMLLWIYLL, LPLSMAYPMLSINLVLVLIGS, and YHNWLGAGAIIIGALLLGGLL. One can recognise an EamA domain in the interval 53–112; sequence GMLLWIYLLQRLPLSMAYPMLSINLVLVLIGSRLFFHEQISYHNWLGAGAIIIGALLLGG.

It belongs to the ArnE family. As to quaternary structure, heterodimer of ArnE and ArnF.

The protein localises to the cell inner membrane. It functions in the pathway bacterial outer membrane biogenesis; lipopolysaccharide biosynthesis. Functionally, translocates 4-amino-4-deoxy-L-arabinose-phosphoundecaprenol (alpha-L-Ara4N-phosphoundecaprenol) from the cytoplasmic to the periplasmic side of the inner membrane. This Aeromonas salmonicida (strain A449) protein is Probable 4-amino-4-deoxy-L-arabinose-phosphoundecaprenol flippase subunit ArnE.